Reading from the N-terminus, the 140-residue chain is ATP synthase epsilon chain (140 aa).

This sequence belongs to the ATPase epsilon chain family. As to quaternary structure, F-type ATPases have 2 components, CF(1) - the catalytic core - and CF(0) - the membrane proton channel. CF(1) has five subunits: alpha(3), beta(3), gamma(1), delta(1), epsilon(1). CF(0) has three main subunits: a, b and c.

It localises to the cell inner membrane. Functionally, produces ATP from ADP in the presence of a proton gradient across the membrane. In Thermodesulfovibrio yellowstonii (strain ATCC 51303 / DSM 11347 / YP87), this protein is ATP synthase epsilon chain.